The sequence spans 402 residues: Glutamate N-acetyltransferase (402 aa).

Residues T146, K172, T185, E267, N397, and T402 each contribute to the substrate site. The active-site Nucleophile is the T185.

The protein belongs to the ArgJ family. As to quaternary structure, heterotetramer of two alpha and two beta chains.

The protein resides in the cytoplasm. It catalyses the reaction N(2)-acetyl-L-ornithine + L-glutamate = N-acetyl-L-glutamate + L-ornithine. It participates in amino-acid biosynthesis; L-arginine biosynthesis; L-ornithine and N-acetyl-L-glutamate from L-glutamate and N(2)-acetyl-L-ornithine (cyclic): step 1/1. Its activity is regulated as follows. Competitively inhibited by L-ornithine. In terms of biological role, catalyzes the transfer of the acetyl group from N(2)-acetylornithine to glutamate, forming N-acetylglutamate and L-ornithine. This chain is Glutamate N-acetyltransferase, found in Methanocaldococcus jannaschii (strain ATCC 43067 / DSM 2661 / JAL-1 / JCM 10045 / NBRC 100440) (Methanococcus jannaschii).